The sequence spans 390 residues: Matrix metalloproteinase-23 (390 aa).

Residues 1–19 (MGRGARVPSEAPGAGVERR) lie on the Cytoplasmic side of the membrane. The propeptide occupies 1–78 (MGRGARVPSE…PGPLAPRRRR (78 aa)). The chain crosses the membrane as a helical; Signal-anchor for type II membrane protein span at residues 20–40 (WLGAALVALCLLPALVLLARL). Residues 41–390 (GAPAVPAWSA…TYSWRVRVRG (350 aa)) lie on the Lumenal side of the membrane. Residues Asn-92 and Asn-148 are each glycosylated (N-linked (GlcNAc...) asparagine). His-211 provides a ligand contact to Zn(2+). Glu-212 is an active-site residue. Zn(2+) contacts are provided by His-215 and His-221. A glycan (N-linked (GlcNAc...) asparagine) is linked at Asn-232. The ShKT domain occupies 255–289 (CLDRLFVCASWARRGFCDARRRLMKRLCPSSCDFC). 3 disulfides stabilise this stretch: Cys-255–Cys-289, Cys-262–Cys-282, and Cys-271–Cys-286. Residues 295–380 (PTVATTPPPP…VVRRQQRVLT (86 aa)) enclose the Ig-like C2-type domain. The N-linked (GlcNAc...) asparagine glycan is linked to Asn-316. Cys-321 and Cys-370 form a disulfide bridge.

The protein belongs to the peptidase M10A family. It depends on Zn(2+) as a cofactor. N-glycosylated. In terms of processing, proteolytic cleavage might yield an active form. Predominantly expressed in ovary, testis and prostate.

It is found in the endoplasmic reticulum membrane. The protein localises to the membrane. With respect to regulation, inhibited by TIMP2. Functionally, protease. May regulate the surface expression of some potassium channels by retaining them in the endoplasmic reticulum. This Homo sapiens (Human) protein is Matrix metalloproteinase-23 (MMP23B).